We begin with the raw amino-acid sequence, 294 residues long: Glyceraldehyde-3-phosphate dehydrogenase (294 aa).

Residues Asp19, Arg63, and Thr105 each contribute to the NAD(+) site. Residues 134–136 (SCT), Thr165, 194–195 (TG), and Arg217 contribute to the D-glyceraldehyde 3-phosphate site. Catalysis depends on Cys135, which acts as the Nucleophile.

The protein belongs to the glyceraldehyde-3-phosphate dehydrogenase family. Homotetramer.

The protein resides in the cytoplasm. It catalyses the reaction D-glyceraldehyde 3-phosphate + phosphate + NAD(+) = (2R)-3-phospho-glyceroyl phosphate + NADH + H(+). It functions in the pathway carbohydrate degradation; glycolysis; pyruvate from D-glyceraldehyde 3-phosphate: step 1/5. In terms of biological role, catalyzes the oxidative phosphorylation of glyceraldehyde 3-phosphate (G3P) to 1,3-bisphosphoglycerate (BPG) using the cofactor NAD. The first reaction step involves the formation of a hemiacetal intermediate between G3P and a cysteine residue, and this hemiacetal intermediate is then oxidized to a thioester, with concomitant reduction of NAD to NADH. The reduced NADH is then exchanged with the second NAD, and the thioester is attacked by a nucleophilic inorganic phosphate to produce BPG. This Shimwellia blattae (Escherichia blattae) protein is Glyceraldehyde-3-phosphate dehydrogenase (gap).